Consider the following 225-residue polypeptide: O-methyltransferase rstn1 (225 aa).

2 residues coordinate S-adenosyl-L-methionine: Q97 and H142.

This sequence belongs to the methyltransferase superfamily.

It catalyses the reaction desmethylrestrictinol + S-adenosyl-L-methionine = restrictinol + S-adenosyl-L-homocysteine + H(+). The protein operates within antifungal biosynthesis. Functionally, O-methyltransferase; part of the gene cluster that mediates the biosynthesis of the tetrahydropyranyl antifungal agent restricticin that acts as an inhibitor of CYP51 and blocks the ergosterol biosynthesis. Within the pathway, rstn1 uses S-adenosylmethionine to methylate position C4 of desmethylrestrictinol to produce restrictinol. The highly reducing polyketide synthase rstn3, the short chain dehydrogenase rstn4, the cyclase rstn5, the FAD-dependent monooxygenase rstn6 and the enoylreductase rstn7 are required to generate the first stable intermediate desmethylrestrictinol. Rstn3 with rstn7 biosynthesize the first polyketide chain intermediate that is reduced by rstn4, followed by epoxidation by rstn6 before 6-endo cyclization via epoxide opening by rstn5 leads to desmethylrestrictinol. The methyltransferase rstn1 then catalyzes the C4 O-methylation of desmethylrestrictinol to produce restrictinol, and the nonribosomal peptide synthetase rstn8 catalyzes the C3 esterification of restrictinol with glycine that leads to restricticin. In Aspergillus nomiae NRRL (strain ATCC 15546 / NRRL 13137 / CBS 260.88 / M93), this protein is O-methyltransferase rstn1.